Here is a 154-residue protein sequence, read N- to C-terminus: UPF0225 protein SG1365 (154 aa).

This sequence belongs to the UPF0225 family.

In Sodalis glossinidius (strain morsitans), this protein is UPF0225 protein SG1365.